Consider the following 400-residue polypeptide: Phosphoglycerate kinase (400 aa).

Residues 21–23 (DFN), R37, 60–63 (HLGR), R121, and R154 each bind substrate. Residues K204, E326, and 355–358 (GGDS) each bind ATP.

Belongs to the phosphoglycerate kinase family. Monomer.

Its subcellular location is the cytoplasm. It catalyses the reaction (2R)-3-phosphoglycerate + ATP = (2R)-3-phospho-glyceroyl phosphate + ADP. The protein operates within carbohydrate degradation; glycolysis; pyruvate from D-glyceraldehyde 3-phosphate: step 2/5. This Chloroflexus aurantiacus (strain ATCC 29366 / DSM 635 / J-10-fl) protein is Phosphoglycerate kinase.